The following is a 283-amino-acid chain: Urease accessory protein UreD (283 aa).

It belongs to the UreD family. As to quaternary structure, ureD, UreF and UreG form a complex that acts as a GTP-hydrolysis-dependent molecular chaperone, activating the urease apoprotein by helping to assemble the nickel containing metallocenter of UreC. The UreE protein probably delivers the nickel.

The protein localises to the cytoplasm. Functionally, required for maturation of urease via the functional incorporation of the urease nickel metallocenter. The chain is Urease accessory protein UreD from Acaryochloris marina (strain MBIC 11017).